The chain runs to 182 residues: Triplatin (182 aa).

The N-terminal stretch at 1-18 is a signal peptide; sequence MKMIIAVTFLGIVTIAFA. Cystine bridges form between Cys-21–Cys-133, Cys-55–Cys-177, and Cys-88–Cys-105.

Belongs to the calycin superfamily. Triabin family. In terms of tissue distribution, expressed in salivary glands.

It is found in the secreted. Its function is as follows. Inhibits platelet aggregation and vasoconstriction through binding to distinct eicosanoids involved in inflammation (acts as a scavenger), and has a role in inhibiting host innate immunity by impairing platelet-assisted formation of neutrophil extracellular traps (NETs). Inhibits platelet aggregation by collagen, and low doses of thromboxane A2 mimetic (TXA2 mimetic), and arachidonic acid (AA) without affecting aggregation induced by ADP, convulxin (GP6 agonist), and PMA. Binds to TXA2, TXB2, prostaglandine H2 mimetic (PGH2 mimetic), PGJ2, and PGF2alpha. Binding is not observed to leukotrienes, AA, and biogenic amines (PGE1, 5(S)-HETE, 12(S)-HETE, 20-HETE, norepinephrine, epinephrine, serotonin, LTC4 and ADP). Induces relaxation of aorta rat previously contracted with TXA2 mimetic. Moreover, it also impairs platelet-assisted formation of neutrophil extracellular traps (NETs). NETs are web-like structures of DNA and proteins that play an important role in killing of pathogens. In addition, NETs are implicated in thrombus formation. In vivo, this protein exhibits antithrombotic activity in two distinct mice models that are highly dependent on platelets. It is noteworthy that it inhibits thrombosis without promoting excessive bleeding. The chain is Triplatin from Triatoma infestans (Assassin bug).